We begin with the raw amino-acid sequence, 861 residues long: Extra-large guanine nucleotide-binding protein 2 (861 aa).

2 disordered regions span residues 1–32 (MAAV…TSSG) and 121–168 (VSGS…DDRV). A compositionally biased stretch (basic and acidic residues) spans 131–143 (KRLDVPEEVKSPA). Positions 146-156 (RLSPSSPLSAS) are enriched in low complexity. Basic and acidic residues predominate over residues 157–168 (AREEDHLDDDRV). Positions 204-211 (RAERKGKR) match the Nuclear localization signal motif. Residues 214-257 (CYRCQLGNRFTEKEVCIVCDAKYCFNCVRRAMGAMPEGRKCQAC) form an RING-type; degenerate zinc finger. The G-alpha domain maps to 461–853 (MLNKLLLIGS…TSMFQEMSTT (393 aa)). Residues 464–477 (KLLLIGSEKGGATT) are G1 motif. 469-477 (GSEKGGATT) contacts GTP. Position 476 (T476) interacts with Ca(2+). The segment at 523–545 (EMSNDQSSGNVGDETSAKPGNSI) is disordered. GTP is bound at residue 624 to 632 (DILQAEGLS). The segment at 624–632 (DILQAEGLS) is G2 motif. Residue S632 coordinates Ca(2+). Positions 665–674 (YQLIRLNPRS) are G3 motif. Residues 737–744 (LLVLTKFD) are G4 motif. 741-744 (TKFD) is a GTP binding site. The G5 motif stretch occupies residues 818–823 (QVSLES).

Belongs to the G-alpha family. XLG subfamily. In terms of assembly, interacts with GB1. Component of a G-protein complex at least composed of XLG2 and GB1. Interacts with RTV1. It depends on Ca(2+) as a cofactor. In terms of tissue distribution, ubiquitous. Strongly expressed in vascular tissues, root and shoot meristems and lateral root primordia.

It is found in the nucleus. Its function is as follows. Guanine nucleotide-binding proteins (G proteins) are involved as modulators or transducers in various transmembrane signaling systems. Binds GTP with specificity. Plays a role in the root morphogenesis by regulation of the cell proliferation. Acts as a positive regulator in resistance to pathogen that triggers the salicylic acid (SA) pathway. Promotes the DNA binding activity of RTV1 specifically to promoter regions of FT and SOC1 in vivo leading to the activation of floral integrator genes. This is Extra-large guanine nucleotide-binding protein 2 (XLG2) from Arabidopsis thaliana (Mouse-ear cress).